The primary structure comprises 780 residues: APC membrane recruitment protein 3 (780 aa).

The span at 20–32 (KLIDSPAKEDPDK) shows a compositional bias: basic and acidic residues. Disordered regions lie at residues 20–59 (KLIDSPAKEDPDKWPLSLGEQQRAYGEKSSQTSPCSQGYG), 341–407 (ELPL…FPRD), 547–569 (KGREDQATTCFPPSRQEPWAHSG), 582–617 (GEPARGSKTPSKDDSLEEGTQDFSEGQSSSEATMTS), 635–659 (KELGTPGNLRYSQGPLRPGHRGSAL), 706–729 (KNPISSKPNEAAGCGLSSSASPQD), and 749–780 (LGPQACSSVDSQPQQLCPRAPEQVPHRGSVGS). Over residues 354 to 376 (SKASSIDTGTPKSEQPESVSTSD) the composition is skewed to polar residues. Over residues 602–617 (QDFSEGQSSSEATMTS) the composition is skewed to polar residues. The segment covering 753–763 (ACSSVDSQPQQ) has biased composition (polar residues).

Belongs to the Amer family.

The protein resides in the cell membrane. Regulator of the canonical Wnt signaling pathway. Acts by specifically binding phosphatidylinositol 4,5-bisphosphate (PtdIns(4,5)P2), translocating to the cell membrane. This is APC membrane recruitment protein 3 (Amer3) from Mus musculus (Mouse).